A 160-amino-acid polypeptide reads, in one-letter code: Transcription antitermination protein NusB (160 aa).

This sequence belongs to the NusB family.

Involved in transcription antitermination. Required for transcription of ribosomal RNA (rRNA) genes. Binds specifically to the boxA antiterminator sequence of the ribosomal RNA (rrn) operons. In Rhizobium meliloti (strain 1021) (Ensifer meliloti), this protein is Transcription antitermination protein NusB.